The following is a 69-amino-acid chain: DNA gyrase inhibitor YacG (69 aa).

Residues cysteine 14, cysteine 17, cysteine 33, and cysteine 37 each coordinate Zn(2+). Positions 46-69 (ADEEKSIPGAPDMSDSDGWSEDQY) are disordered. Acidic residues predominate over residues 59 to 69 (SDSDGWSEDQY).

The protein belongs to the DNA gyrase inhibitor YacG family. In terms of assembly, interacts with GyrB. The cofactor is Zn(2+).

Inhibits all the catalytic activities of DNA gyrase by preventing its interaction with DNA. Acts by binding directly to the C-terminal domain of GyrB, which probably disrupts DNA binding by the gyrase. This is DNA gyrase inhibitor YacG from Aliivibrio fischeri (strain ATCC 700601 / ES114) (Vibrio fischeri).